The sequence spans 541 residues: uncharacterized protein (541 aa).

5 helical membrane-spanning segments follow: residues 10 to 32 (LNNQ…KINI), 39 to 57 (SSAI…YTLP), 62 to 84 (TLGL…FFSL), 91 to 113 (LSLG…TYLF), and 146 to 168 (APAA…IQII). RCK C-terminal domains are found at residues 183–260 (LNKE…DDLE) and 268–352 (TPVD…IFGN). 6 helical membrane passes run 357-375 (SYNF…GFIL), 385-407 (SGIF…SNIY), 428-447 (GLVL…ILAT), 452-474 (GLQL…VFIC), 481-500 (PFLS…PGLA), and 515-537 (YATV…IFIV).

Belongs to the AAE transporter (TC 2.A.81) family.

It is found in the cell membrane. This is an uncharacterized protein from Desulfotalea psychrophila (strain LSv54 / DSM 12343).